The chain runs to 44 residues: pyr operon leader peptide (44 aa).

This chain is pyr operon leader peptide (pyrL), found in Escherichia coli O157:H7.